The chain runs to 447 residues: N-succinylarginine dihydrolase (447 aa).

Substrate-binding positions include 19 to 28 (AGLSFGNEAS), Asn-110, and 137 to 138 (HR). Glu-174 is a catalytic residue. Arg-212 provides a ligand contact to substrate. His-248 is a catalytic residue. Substrate-binding residues include Asp-250 and Asn-359. The active-site Nucleophile is the Cys-365.

Belongs to the succinylarginine dihydrolase family. As to quaternary structure, homodimer.

The enzyme catalyses N(2)-succinyl-L-arginine + 2 H2O + 2 H(+) = N(2)-succinyl-L-ornithine + 2 NH4(+) + CO2. It functions in the pathway amino-acid degradation; L-arginine degradation via AST pathway; L-glutamate and succinate from L-arginine: step 2/5. In terms of biological role, catalyzes the hydrolysis of N(2)-succinylarginine into N(2)-succinylornithine, ammonia and CO(2). This is N-succinylarginine dihydrolase from Escherichia coli (strain K12 / MC4100 / BW2952).